We begin with the raw amino-acid sequence, 180 residues long: Transcription factor HES-7.1-B (180 aa).

The bHLH domain maps to histidine 13–arginine 70. An Orange domain is found at tyrosine 84–glutamine 116. A WRPW motif motif is present at residues tryptophan 176 to tryptophan 179.

Transcription repression requires formation of a complex with a corepressor protein of the Groucho/TLE family. As to expression, expressed in the presumptive midbrain-hindbrain boundary (MHB) as early as the early gastrula stage (stage 10.5). Expression in the MHB continues through to tailbud stage. Also transiently expressed in the eye anlage at late neurula stage.

It is found in the nucleus. In terms of biological role, transcriptional repressor. Represses transcription from both N box- and E box-containing promoters. Demarcates the prospective midbrain-hindbrain boundary (MHB) region in the neuroectoderm in early gastrulae embryos by repressing transcription of a number of target genes. The polypeptide is Transcription factor HES-7.1-B (hes7.1-b) (Xenopus laevis (African clawed frog)).